The sequence spans 204 residues: Recombination protein RecR (204 aa).

The C4-type zinc finger occupies 63 to 78 (CRICCNVADSELCPIC). The Toprim domain occupies 86-181 (NKICVVEQPQ…KVTRLARGLP (96 aa)).

The protein belongs to the RecR family.

Functionally, may play a role in DNA repair. It seems to be involved in an RecBC-independent recombinational process of DNA repair. It may act with RecF and RecO. The protein is Recombination protein RecR of Dehalococcoides mccartyi (strain ATCC BAA-2100 / JCM 16839 / KCTC 5957 / BAV1).